The primary structure comprises 198 residues: 8-oxoguanine DNA glycosylase/AP lyase (198 aa).

Residues lysine 122 and aspartate 140 contribute to the active site.

The protein belongs to the type-2 OGG1 family. As to quaternary structure, monomer.

The catalysed reaction is 2'-deoxyribonucleotide-(2'-deoxyribose 5'-phosphate)-2'-deoxyribonucleotide-DNA = a 3'-end 2'-deoxyribonucleotide-(2,3-dehydro-2,3-deoxyribose 5'-phosphate)-DNA + a 5'-end 5'-phospho-2'-deoxyribonucleoside-DNA + H(+). Its function is as follows. Catalyzes the excision of an oxidatively damaged form of guanine (7,8-dihydro-8-oxoguanine = 8-oxoG) from DNA. Also cleaves the DNA backbone at apurinic/apyrimidinic sites (AP sites). Efficiently cleaves oligomers containing 8-oxoG:C and 8-oxoG:G base pairs, and is less effective on oligomers containing 8-oxoG:T and 8-oxoG:A mispairs. This is 8-oxoguanine DNA glycosylase/AP lyase from Archaeoglobus fulgidus (strain ATCC 49558 / DSM 4304 / JCM 9628 / NBRC 100126 / VC-16).